A 205-amino-acid chain; its full sequence is Large ribosomal subunit protein uL4 (205 aa).

The protein belongs to the universal ribosomal protein uL4 family. As to quaternary structure, part of the 50S ribosomal subunit. Contacts proteins L15 and L34.

Functionally, one of the primary rRNA binding proteins, this protein initially binds near the 5'-end of the 23S rRNA. It is important during the early stages of 50S assembly. Makes multiple contacts with different domains of the 23S rRNA in the assembled 50S subunit. Its function is as follows. This protein is located close to the polypeptide exit tunnel, and interacts with the modified macrolide azithromycin, which blocks the tunnel. The protein is Large ribosomal subunit protein uL4 (rplD) of Deinococcus radiodurans (strain ATCC 13939 / DSM 20539 / JCM 16871 / CCUG 27074 / LMG 4051 / NBRC 15346 / NCIMB 9279 / VKM B-1422 / R1).